The primary structure comprises 573 residues: PCNA-interacting partner (573 aa).

Disordered regions lie at residues 470–505 (VGKARIEASSENAHVGRWKGDKLPRKSTQRQISKGK) and 531–560 (PKVPSGSHSKAGGKLAQGTKGNRCPARGKL).

The protein belongs to the PARI family. Interacts with RAD51 and PCNA. Interacts with PARP1. Interacts with TASOR. In terms of tissue distribution, expressed in the ovary, Sertoli cells of the testis and in granular cells within the cerebellum.

The protein localises to the cytoplasm. It localises to the nucleus. Required to suppress inappropriate homologous recombination, thereby playing a central role DNA repair and in the maintenance of genomic stability. Antagonizes homologous recombination by interfering with the formation of the RAD51-DNA homologous recombination structure. Binds single-strand DNA and poly(A) homopolymers. Positively regulate the poly(ADP-ribosyl)ation activity of PARP1; however such function may be indirect. This is PCNA-interacting partner (Parpbp) from Mus musculus (Mouse).